Consider the following 187-residue polypeptide: Corticoliberin (187 aa).

The N-terminal stretch at 1–24 is a signal peptide; it reads MRLRLLVSAGMLLVALSPCLPCRA. Residues 25-144 constitute a propeptide that is removed on maturation; that stretch reads LLSRGSVSGA…HQGALERERR (120 aa). A disordered region spans residues 75–95; sequence AARLSPNSTPLTAGRGSRPSH. Ile-185 bears the Isoleucine amide mark.

It belongs to the sauvagine/corticotropin-releasing factor/urotensin I family. Interacts (via C-terminus) with CRFR1 (via N-terminal extracellular domain). As to expression, produced by the hypothalamus.

It localises to the secreted. Its function is as follows. Hormone regulating the release of corticotropin from pituitary gland. Induces NLRP6 in intestinal epithelial cells, hence may influence gut microbiota profile. The sequence is that of Corticoliberin (Crh) from Rattus norvegicus (Rat).